A 103-amino-acid polypeptide reads, in one-letter code: MERENKPKGFSGFSWGIALFCLPILLWPLALTISPNLLKNPRLSETETTLMSVFLWAYPFGLALIARLAYRLNQHKPPFARGLLGLSAVAFYGMLFYVAGGFH.

3 helical membrane-spanning segments follow: residues 12–34 (GFSWGIALFCLPILLWPLALTIS), 49–66 (TLMSVFLWAYPFGLALIA), and 79–101 (FARGLLGLSAVAFYGMLFYVAGG).

The protein localises to the cell membrane. This is an uncharacterized protein from Pasteurella multocida (strain Pm70).